Consider the following 459-residue polypeptide: NADH-ubiquinone oxidoreductase chain 4 (459 aa).

12 consecutive transmembrane segments (helical) span residues 20–42 (PKWLWSATTTHSLIIASLSLTLF), 61–81 (MISTPLIILTCWLLPLMIIAS), 103–123 (LQALLIMAFSATEIILFYIMF), 148–168 (IYFLFYTLAGSLPLLVALLYL), 194–214 (FLWVACVTAFLVKMPLYGVHL), 224–244 (PVAGSMILAAILLKLGGYGMI), 257–277 (LAYPFIILALWGIIMTGSICM), 284–303 (SLIAYSSVSHMGLVASGILI), 307–329 (WGFTGAIILMIAHGLTSSALFCL), 350–370 (IILPLMATWWFIMSLANMALP), 392–414 (TILLTGTGTLITASYSLYLYMSS), and 435–455 (LLLTLHIIPIILLMIKPELIW).

Belongs to the complex I subunit 4 family.

It is found in the mitochondrion membrane. The catalysed reaction is a ubiquinone + NADH + 5 H(+)(in) = a ubiquinol + NAD(+) + 4 H(+)(out). Functionally, core subunit of the mitochondrial membrane respiratory chain NADH dehydrogenase (Complex I) that is believed to belong to the minimal assembly required for catalysis. Complex I functions in the transfer of electrons from NADH to the respiratory chain. The immediate electron acceptor for the enzyme is believed to be ubiquinone. This is NADH-ubiquinone oxidoreductase chain 4 (MT-ND4) from Polypterus ornatipinnis (Ornate bichir).